The chain runs to 141 residues: Transcription antitermination protein NusB (141 aa).

Belongs to the NusB family.

Involved in transcription antitermination. Required for transcription of ribosomal RNA (rRNA) genes. Binds specifically to the boxA antiterminator sequence of the ribosomal RNA (rrn) operons. The protein is Transcription antitermination protein NusB of Neisseria meningitidis serogroup C (strain 053442).